The primary structure comprises 204 residues: UPF0637 protein SAS1041 (204 aa).

It belongs to the UPF0637 family.

This Staphylococcus aureus (strain MSSA476) protein is UPF0637 protein SAS1041.